A 140-amino-acid polypeptide reads, in one-letter code: Large ribosomal subunit protein uL11 (140 aa).

Belongs to the universal ribosomal protein uL11 family. As to quaternary structure, part of the ribosomal stalk of the 50S ribosomal subunit. Interacts with L10 and the large rRNA to form the base of the stalk. L10 forms an elongated spine to which L12 dimers bind in a sequential fashion forming a multimeric L10(L12)X complex. One or more lysine residues are methylated.

Functionally, forms part of the ribosomal stalk which helps the ribosome interact with GTP-bound translation factors. The sequence is that of Large ribosomal subunit protein uL11 from Staphylococcus aureus (strain bovine RF122 / ET3-1).